The primary structure comprises 239 residues: Ribonuclease P protein component 3 (239 aa).

This sequence belongs to the eukaryotic/archaeal RNase P protein component 3 family. As to quaternary structure, consists of a catalytic RNA component and at least 4-5 protein subunits.

It is found in the cytoplasm. The catalysed reaction is Endonucleolytic cleavage of RNA, removing 5'-extranucleotides from tRNA precursor.. Part of ribonuclease P, a protein complex that generates mature tRNA molecules by cleaving their 5'-ends. This chain is Ribonuclease P protein component 3, found in Methanosarcina barkeri (strain Fusaro / DSM 804).